A 155-amino-acid polypeptide reads, in one-letter code: SsrA-binding protein (155 aa).

The protein belongs to the SmpB family.

It is found in the cytoplasm. In terms of biological role, required for rescue of stalled ribosomes mediated by trans-translation. Binds to transfer-messenger RNA (tmRNA), required for stable association of tmRNA with ribosomes. tmRNA and SmpB together mimic tRNA shape, replacing the anticodon stem-loop with SmpB. tmRNA is encoded by the ssrA gene; the 2 termini fold to resemble tRNA(Ala) and it encodes a 'tag peptide', a short internal open reading frame. During trans-translation Ala-aminoacylated tmRNA acts like a tRNA, entering the A-site of stalled ribosomes, displacing the stalled mRNA. The ribosome then switches to translate the ORF on the tmRNA; the nascent peptide is terminated with the 'tag peptide' encoded by the tmRNA and targeted for degradation. The ribosome is freed to recommence translation, which seems to be the essential function of trans-translation. This Moorella thermoacetica (strain ATCC 39073 / JCM 9320) protein is SsrA-binding protein.